The sequence spans 88 residues: Defensin-like protein 98 (88 aa).

A signal peptide spans Met-1–Gly-29. 4 cysteine pairs are disulfide-bonded: Cys-33–Cys-76, Cys-40–Cys-62, Cys-46–Cys-73, and Cys-50–Cys-75.

This sequence belongs to the DEFL family.

The protein localises to the secreted. This is Defensin-like protein 98 from Arabidopsis thaliana (Mouse-ear cress).